The sequence spans 569 residues: Rab GTPase-binding effector protein 2 (569 aa).

Disordered regions lie at residues 1–41 (MAAA…GELS), 180–265 (IQRR…ETAS), and 388–411 (RAEQLPSSAPQGSQQEQGEEESLP). At Ala-2 the chain carries N-acetylalanine. A coiled-coil region spans residues 34-187 (EAESGELSRL…QEIQRRPRHA (154 aa)). Ser-189 and Ser-193 each carry phosphoserine. Ser-200 carries the phosphoserine; by GSK3-alpha modification. Ser-204 carries the post-translational modification Phosphoserine. Low complexity-rich tracts occupy residues 245 to 257 (SSSSLPQSRQGLS) and 393 to 403 (PSSAPQGSQQE). Residues 289-523 (DTQWEQLQTE…LQAELETSEQ (235 aa)) adopt a coiled-coil conformation.

The protein belongs to the rabaptin family. Heterodimer with RABGEF1. The dimer binds RAB5A that has been activated by GTP-binding. Interacts with SDCCAG8; this interaction is important for ciliogenesis regulation. Interacts with RAB4A; this interaction may mediate VEGFR2 cell surface expression.

The protein resides in the cytoplasm. The protein localises to the early endosome. It localises to the cytoskeleton. It is found in the microtubule organizing center. Its subcellular location is the centrosome. The protein resides in the cilium basal body. Its function is as follows. Plays a role in membrane trafficking and in homotypic early endosome fusion. Participates in arteriogenesis by regulating vascular endothelial growth factor receptor 2/VEGFR2 cell surface expression and endosomal trafficking. By interacting with SDCCAG8, localizes to centrosomes and plays a critical role in ciliogenesis. The protein is Rab GTPase-binding effector protein 2 (RABEP2) of Homo sapiens (Human).